Reading from the N-terminus, the 691-residue chain is Elongation factor G (691 aa).

Residues 12–286 (NKLRNIGIMA…GIVRYLPSPL (275 aa)) form the tr-type G domain. GTP is bound by residues 21-28 (AHIDAGKT), 85-89 (DTPGH), and 139-142 (NKMD).

This sequence belongs to the TRAFAC class translation factor GTPase superfamily. Classic translation factor GTPase family. EF-G/EF-2 subfamily.

It localises to the cytoplasm. Catalyzes the GTP-dependent ribosomal translocation step during translation elongation. During this step, the ribosome changes from the pre-translocational (PRE) to the post-translocational (POST) state as the newly formed A-site-bound peptidyl-tRNA and P-site-bound deacylated tRNA move to the P and E sites, respectively. Catalyzes the coordinated movement of the two tRNA molecules, the mRNA and conformational changes in the ribosome. The polypeptide is Elongation factor G (Fervidobacterium nodosum (strain ATCC 35602 / DSM 5306 / Rt17-B1)).